Reading from the N-terminus, the 87-residue chain is Cytochrome c oxidase subunit 6B1 (87 aa).

The region spanning 28–74 is the CHCH domain; the sequence is TRNCWQNYLDFHRCQKAMTTKGGNVSVCEWYQRVYQSLCPTSWVTDW. Residues 31 to 41 carry the Cx9C motif motif; that stretch reads CWQNYLDFHRC. 2 disulfides stabilise this stretch: Cys31–Cys66 and Cys41–Cys55. The short motif at 55 to 66 is the Cx10C motif element; it reads CEWYQRVYQSLC.

The protein resides in the mitochondrion intermembrane space. Connects the two COX monomers into the physiological dimeric form. The protein is Cytochrome c oxidase subunit 6B1 (COX6B1) of Macaca fascicularis (Crab-eating macaque).